Reading from the N-terminus, the 396-residue chain is Queuine tRNA-ribosyltransferase catalytic subunit 1 (396 aa).

Asp99 serves as the catalytic Proton acceptor. Queuine is bound by residues 99–103 (DSGGF), Asp153, Gln196, and Gly223. The RNA binding stretch occupies residues 254 to 260 (GVGYATD). Catalysis depends on Asp273, which acts as the Nucleophile. Residues 278–282 (TRTAR) form an RNA binding; important for wobble base 34 recognition region. Positions 311, 313, 316, and 341 each coordinate Zn(2+).

This sequence belongs to the queuine tRNA-ribosyltransferase family. In terms of assembly, heterodimer of a catalytic subunit qtrt1 and an accessory subunit qtrt2. Requires Zn(2+) as cofactor.

The protein localises to the cytoplasm. It is found in the mitochondrion outer membrane. It carries out the reaction guanosine(34) in tRNA + queuine = queuosine(34) in tRNA + guanine. Functionally, catalytic subunit of the queuine tRNA-ribosyltransferase (TGT) that catalyzes the base-exchange of a guanine (G) residue with queuine (Q) at position 34 (anticodon wobble position) in tRNAs with GU(N) anticodons (tRNA-Asp, -Asn, -His and -Tyr), resulting in the hypermodified nucleoside queuosine (7-(((4,5-cis-dihydroxy-2-cyclopenten-1-yl)amino)methyl)-7-deazaguanosine). Catalysis occurs through a double-displacement mechanism. The nucleophile active site attacks the C1' of nucleotide 34 to detach the guanine base from the RNA, forming a covalent enzyme-RNA intermediate. The proton acceptor active site deprotonates the incoming queuine, allowing a nucleophilic attack on the C1' of the ribose to form the product. This Xenopus laevis (African clawed frog) protein is Queuine tRNA-ribosyltransferase catalytic subunit 1.